We begin with the raw amino-acid sequence, 906 residues long: Inter-alpha-trypsin inhibitor heavy chain H1 (906 aa).

The signal sequence occupies residues 1-22; that stretch reads MGLRGLLCVCLVSLLALQAVAA. Positions 23–29 are excised as a propeptide; it reads QGSPTRN. One can recognise a VIT domain in the interval 32–161; that stretch reads GGKKRMAVDA…KATFRLTYEE (130 aa). Cys-55 carries an S-linked (Hex...) cysteine glycan. Ser-124 is subject to Phosphoserine. In terms of domain architecture, VWFA spans 287–470; the sequence is NVVFVIDISS…QQLQGFYEQV (184 aa). A phosphothreonine mark is found at Thr-397 and Thr-402. Residue Asn-583 is glycosylated (N-linked (GlcNAc...) asparagine). The O-linked (GalNAc...) serine glycan is linked to Ser-643. O-linked (GalNAc...) threonine glycosylation is present at Thr-648. Asp-667 is modified (aspartate 1-(chondroitin 4-sulfate)-ester). A propeptide spanning residues 668–906 is cleaved from the precursor; sequence PHFLIHVPQK…HTDYIVPDIF (239 aa). N-linked (GlcNAc...) asparagine glycosylation occurs at Asn-745.

Belongs to the ITIH family. As to quaternary structure, I-alpha-I plasma protease inhibitors are assembled from one or two heavy chains (HC) and one light chain, bikunin. Inter-alpha-inhibitor (I-alpha-I) is composed of ITIH1/HC1, ITIH2/HC2 and bikunin. Interacts with TNFAIP6 (via Link and CUB domains). Post-translationally, heavy chains are linked to bikunin via chondroitin 4-sulfate esterified to the alpha-carboxyl of the C-terminal aspartate after propeptide cleavage. The S-linked glycan is composed of two 6-carbon sugars, possibly Glc or Gal.

Its subcellular location is the secreted. May act as a carrier of hyaluronan in serum or as a binding protein between hyaluronan and other matrix protein, including those on cell surfaces in tissues to regulate the localization, synthesis and degradation of hyaluronan which are essential to cells undergoing biological processes. The chain is Inter-alpha-trypsin inhibitor heavy chain H1 (ITIH1) from Bos taurus (Bovine).